We begin with the raw amino-acid sequence, 359 residues long: Ribosomal RNA large subunit methyltransferase M (359 aa).

S-adenosyl-L-methionine contacts are provided by residues Ser-186, 219 to 222, Asp-238, Asp-258, and Asp-275; that span reads CPGG. Catalysis depends on Lys-304, which acts as the Proton acceptor.

This sequence belongs to the class I-like SAM-binding methyltransferase superfamily. RNA methyltransferase RlmE family. RlmM subfamily. In terms of assembly, monomer.

It is found in the cytoplasm. The catalysed reaction is cytidine(2498) in 23S rRNA + S-adenosyl-L-methionine = 2'-O-methylcytidine(2498) in 23S rRNA + S-adenosyl-L-homocysteine + H(+). Functionally, catalyzes the 2'-O-methylation at nucleotide C2498 in 23S rRNA. This chain is Ribosomal RNA large subunit methyltransferase M, found in Vibrio vulnificus (strain YJ016).